Consider the following 337-residue polypeptide: Putative F-box protein At4g09870 (337 aa).

Positions 1-46 (MSISELSQDLLEEILCRVPAISLKKLRSTCKLWNSLFIDKRVRNEL) constitute an F-box domain.

This chain is Putative F-box protein At4g09870, found in Arabidopsis thaliana (Mouse-ear cress).